A 144-amino-acid chain; its full sequence is Prefoldin subunit alpha (144 aa).

It belongs to the prefoldin alpha subunit family. As to quaternary structure, heterohexamer of two alpha and four beta subunits.

Its subcellular location is the cytoplasm. Molecular chaperone capable of stabilizing a range of proteins. Seems to fulfill an ATP-independent, HSP70-like function in archaeal de novo protein folding. In Methanococcus aeolicus (strain ATCC BAA-1280 / DSM 17508 / OCM 812 / Nankai-3), this protein is Prefoldin subunit alpha.